Here is a 197-residue protein sequence, read N- to C-terminus: Transmembrane protein 126A (197 aa).

The Mitochondrial matrix portion of the chain corresponds to 1 to 35 (MENHEPDGTIIKENLTDIIARKINQLPEAERNLLE). Residues 36-56 (NGSTYVGLNAALCGLIANSLF) traverse the membrane as a helical segment. The Mitochondrial intermembrane portion of the chain corresponds to 57-58 (RR). Residues 59 to 79 (ILHVTQARIAAGLPMAVIPFL) form a helical membrane-spanning segment. Topologically, residues 80-107 (TANVSYKGFVSLPLNTGDLQCETCTVTR) are mitochondrial matrix. A helical membrane pass occupies residues 108–128 (GGLVGLVFGGLYPVFLAIPVN). At 129-160 (GGLAARYNSALLPEKGNILNYWIRISKPVFRK) the chain is on the mitochondrial intermembrane side. The chain crosses the membrane as a helical span at residues 161–177 (MLFPILLQTGFAAYLGS). Over 178–197 (RQYKLLIKALQLPEPGLEIE) the chain is Mitochondrial matrix.

It belongs to the TMEM126 family. Interacts with OXA1L; promoting cotranslational quality control in mitochondria.

It is found in the mitochondrion inner membrane. Functionally, protein required for the cotranslational protein quality control in the inner membrane of the mitochondria. Associates with newly synthesized polypeptides and may act as a chaperone that cooperates with OXA1L for the insertion of newly synthesized mitochondrial proteins into the inner membrane. Required for the assembly of the ND4 module of mitochondrial complex I. The protein is Transmembrane protein 126A (TMEM126A) of Bos taurus (Bovine).